Reading from the N-terminus, the 80-residue chain is MSEFWHKLGCCVVEKPQPKKKRRRIDRTMIGEPMNFVHLTHIGSGEMGAGDGLAMTGAVQEQMRSKGNHRDRPWSNSRAL.

Residues C10 and C11 are each lipidated (S-palmitoyl cysteine). Positions 30-43 constitute a CRIB domain; sequence IGEPMNFVHLTHIG. Positions 48 to 80 are disordered; it reads GAGDGLAMTGAVQEQMRSKGNHRDRPWSNSRAL.

This sequence belongs to the CDC42SE/SPEC family. As to quaternary structure, interacts with CDC42 (in GTP-bound form). Interacts weakly with RAC1 and not at all with RHOA.

It is found in the cytoplasm. Its subcellular location is the cytoskeleton. The protein resides in the cell membrane. In terms of biological role, probably involved in the organization of the actin cytoskeleton by acting downstream of CDC42, inducing actin filament assembly. Alters CDC42-induced cell shape changes. In activated T-cells, may play a role in CDC42-mediated F-actin accumulation at the immunological synapse. May play a role in early contractile events in phagocytosis in macrophages. The polypeptide is CDC42 small effector protein 1 (Cdc42se1) (Mus musculus (Mouse)).